We begin with the raw amino-acid sequence, 185 residues long: Photosystem I assembly protein Ycf4 (185 aa).

2 helical membrane passes run 24-44 (YIIGGMLTIGGIGFLLASISS) and 66-86 (IIMGAYGVVANLLNFYLWYMV).

The protein belongs to the Ycf4 family.

The protein localises to the cellular thylakoid membrane. In terms of biological role, seems to be required for the assembly of the photosystem I complex. The protein is Photosystem I assembly protein Ycf4 of Prochlorococcus marinus (strain MIT 9312).